The following is an 832-amino-acid chain: Tuftelin-interacting protein 11 (832 aa).

2 disordered regions span residues 1–21 and 33–145; these read MSMS…GVEI and NEFN…GNWE. 2 stretches are compositionally biased toward basic and acidic residues: residues 36-49 and 88-99; these read NPDR…KEEA and TAAEEKAEREGS. Residues 121 to 130 show a composition bias toward polar residues; it reads TGGSFKTSQR. The region spanning 148-194 is the G-patch domain; it reads TRGIGQKLLQKMGYVPGKGLGKNAQGIVNPIEAKLRKGKGAVGAYGS. Ser209 is subject to Phosphoserine.

The protein belongs to the TFP11/STIP family. Identified in the spliceosome C complex.

The protein resides in the nucleus. Functionally, involved in pre-mRNA splicing, specifically in spliceosome disassembly during late-stage splicing events. In Danio rerio (Zebrafish), this protein is Tuftelin-interacting protein 11 (tfip11).